The primary structure comprises 576 residues: K(+)/H(+) antiporter NhaP2 (576 aa).

13 helical membrane passes run 6 to 26 (INSFFLIGALLTAVSVLLSPM), 34 to 54 (ILLIFLAVGILAGEDGPGGIL), 58 to 78 (YSTAYLVSNLALAIILLDGGM), 87 to 107 (VALWPALSLATFGVAITTSIT), 109 to 129 (MMAAWLFDLHWLQGLLVGAIV), 163 to 183 (PMAVFLTVTLIAILANVDTEM), 185 to 205 (FSFMFISFIKQFGLGICLGLG), 219 to 239 (LADGLYSILVLSGGLIIYAAS), 242 to 262 (LGGSGILSIYLVGLFLGNKPT), 271 to 291 (VLDGMTWVSQIGMFLVLGLLL), 299 to 319 (ILIPGFALAFGMILFARPVAV), 335 to 355 (WFISWVGLRGAVPIILAVFPM), and 359 to 379 (LPGAQLYFNLAFFVVLVSLLV). An RCK C-terminal domain is found at 405-486 (SGVEIYPSSE…LEALSNLFSQ (82 aa)).

It belongs to the monovalent cation:proton antiporter 1 (CPA1) transporter (TC 2.A.36) family. NhaP2 subfamily.

It is found in the cell inner membrane. It carries out the reaction K(+)(in) + H(+)(out) = K(+)(out) + H(+)(in). Its function is as follows. K(+)/H(+) antiporter that extrudes potassium in exchange for external protons and maintains the internal concentration of potassium under toxic levels. This chain is K(+)/H(+) antiporter NhaP2, found in Shewanella baltica (strain OS195).